A 458-amino-acid chain; its full sequence is Cytoplasmic tRNA 2-thiolation protein 2 (458 aa).

This sequence belongs to the CTU2/NCS2 family.

Its subcellular location is the cytoplasm. It participates in tRNA modification; 5-methoxycarbonylmethyl-2-thiouridine-tRNA biosynthesis. Plays a central role in 2-thiolation of mcm(5)S(2)U at tRNA wobble positions of tRNA(Lys), tRNA(Glu) and tRNA(Gln). May act by forming a heterodimer with NCS6/CTU1 that ligates sulfur from thiocarboxylated URM1 onto the uridine of tRNAs at wobble position. The protein is Cytoplasmic tRNA 2-thiolation protein 2 of Arabidopsis thaliana (Mouse-ear cress).